The following is a 468-amino-acid chain: Trigger factor (468 aa).

Residues 162–243 (GDVLTLDLQA…VSQVAARELP (82 aa)) form the PPIase FKBP-type domain. The tract at residues 428 to 468 (NGEIVDLDDEEDEETEAAEADATEAADAEKADDKAEEKTEG) is disordered. The segment covering 432–453 (VDLDDEEDEETEAAEADATEAA) has biased composition (acidic residues). Residues 454-468 (DAEKADDKAEEKTEG) show a composition bias toward basic and acidic residues.

The protein belongs to the FKBP-type PPIase family. Tig subfamily.

It is found in the cytoplasm. It catalyses the reaction [protein]-peptidylproline (omega=180) = [protein]-peptidylproline (omega=0). Functionally, involved in protein export. Acts as a chaperone by maintaining the newly synthesized protein in an open conformation. Functions as a peptidyl-prolyl cis-trans isomerase. In Streptomyces coelicolor (strain ATCC BAA-471 / A3(2) / M145), this protein is Trigger factor.